The following is a 124-amino-acid chain: Mitochondrial import inner membrane translocase subunit TIM16 (124 aa).

A J-like region spans residues 58 to 109 (EAQQILNISKLSPEEVQNYEHLFKVNDKSVGDSFYLQSKVVRAKERLDEELQ). Ser-69 is subject to Phosphoserine.

The protein belongs to the TIM16/PAM16 family. In terms of assembly, probable component of the PAM complex at least composed of a mitochondrial HSP70 protein, GRPEL1 or GRPEL2, TIMM44, TIMM16/PAM16 and TIMM14/DNAJC19. Interacts with DNAJC19. Directly interacts with DNAJC15; this interaction counteracts DNAJC15-dependent stimulation of HSPA9 ATPase activity. Associates with the TIM23 complex.

It localises to the mitochondrion inner membrane. In terms of biological role, regulates ATP-dependent protein translocation into the mitochondrial matrix. Inhibits DNAJC19 stimulation of HSPA9/Mortalin ATPase activity. This is Mitochondrial import inner membrane translocase subunit TIM16 (Magmas-ps1) from Rattus norvegicus (Rat).